Consider the following 68-residue polypeptide: Large ribosomal subunit protein bL35 (68 aa).

The tract at residues 29–68 is disordered; it reads GGVSHYNTKKSSKRKRQGRKPQYVPKNLEHKVKALLPNDV. Positions 35 to 47 are enriched in basic residues; sequence NTKKSSKRKRQGR.

This sequence belongs to the bacterial ribosomal protein bL35 family.

This Sulfurihydrogenibium sp. (strain YO3AOP1) protein is Large ribosomal subunit protein bL35.